The following is a 277-amino-acid chain: S-formylglutathione hydrolase FrmB (277 aa).

Catalysis depends on charge relay system residues S145, D221, and H254.

This sequence belongs to the esterase D family.

It catalyses the reaction S-formylglutathione + H2O = formate + glutathione + H(+). Its function is as follows. Serine hydrolase involved in the detoxification of formaldehyde. Hydrolyzes S-formylglutathione to glutathione and formate. In Escherichia coli O9:H4 (strain HS), this protein is S-formylglutathione hydrolase FrmB (frmB).